A 428-amino-acid polypeptide reads, in one-letter code: Glutamate-1-semialdehyde 2,1-aminomutase (428 aa).

Lysine 265 bears the N6-(pyridoxal phosphate)lysine mark.

The protein belongs to the class-III pyridoxal-phosphate-dependent aminotransferase family. HemL subfamily. In terms of assembly, homodimer. It depends on pyridoxal 5'-phosphate as a cofactor.

Its subcellular location is the cytoplasm. It carries out the reaction (S)-4-amino-5-oxopentanoate = 5-aminolevulinate. It functions in the pathway porphyrin-containing compound metabolism; protoporphyrin-IX biosynthesis; 5-aminolevulinate from L-glutamyl-tRNA(Glu): step 2/2. This chain is Glutamate-1-semialdehyde 2,1-aminomutase, found in Ruthia magnifica subsp. Calyptogena magnifica.